The following is a 452-amino-acid chain: Serine--tRNA ligase (452 aa).

251-253 serves as a coordination point for L-serine; the sequence is TSE. Position 282 to 284 (282 to 284) interacts with ATP; it reads RSE. Glu305 serves as a coordination point for L-serine. Position 369-372 (369-372) interacts with ATP; sequence EISS. L-serine is bound at residue Ser404.

Belongs to the class-II aminoacyl-tRNA synthetase family. Type-1 seryl-tRNA synthetase subfamily. In terms of assembly, homodimer. The tRNA molecule binds across the dimer.

Its subcellular location is the cytoplasm. The catalysed reaction is tRNA(Ser) + L-serine + ATP = L-seryl-tRNA(Ser) + AMP + diphosphate + H(+). It catalyses the reaction tRNA(Sec) + L-serine + ATP = L-seryl-tRNA(Sec) + AMP + diphosphate + H(+). It functions in the pathway aminoacyl-tRNA biosynthesis; selenocysteinyl-tRNA(Sec) biosynthesis; L-seryl-tRNA(Sec) from L-serine and tRNA(Sec): step 1/1. Its function is as follows. Catalyzes the attachment of serine to tRNA(Ser). Is also able to aminoacylate tRNA(Sec) with serine, to form the misacylated tRNA L-seryl-tRNA(Sec), which will be further converted into selenocysteinyl-tRNA(Sec). In Albidiferax ferrireducens (strain ATCC BAA-621 / DSM 15236 / T118) (Rhodoferax ferrireducens), this protein is Serine--tRNA ligase.